A 264-amino-acid polypeptide reads, in one-letter code: MNKVTTKTLFEKKQKGEKITMLTAYDYTFAKLFDSCMVDILLVGDSLGMVILGYDSTIPVTMEDMEHHVKAVARGTKYSMVVADMPFLSYHTTPEEAVRNAGRLIRAGAYAVKIEGCDDVIDKIEAVIKAQIPVMGHLGLTPQSVNVFGGYDLRAKEEKEAKKLIEDAKKLEEVGVFAIVLEKVPAMVAKQVQESVKVPIIGIGAGPYCDGQVLVCYDMLGMYEDFKPKFVKRYAEVGSIIKDAVSKYIDEVKRGEFPGKEHSY.

Mg(2+) is bound by residues Asp-45 and Asp-84. Residues 45–46 (DS), Asp-84, and Lys-113 each bind 3-methyl-2-oxobutanoate. Glu-115 contacts Mg(2+). Residue Glu-182 is the Proton acceptor of the active site.

It belongs to the PanB family. Homodecamer; pentamer of dimers. It depends on Mg(2+) as a cofactor.

It localises to the cytoplasm. The catalysed reaction is 3-methyl-2-oxobutanoate + (6R)-5,10-methylene-5,6,7,8-tetrahydrofolate + H2O = 2-dehydropantoate + (6S)-5,6,7,8-tetrahydrofolate. The protein operates within cofactor biosynthesis; (R)-pantothenate biosynthesis; (R)-pantoate from 3-methyl-2-oxobutanoate: step 1/2. In terms of biological role, catalyzes the reversible reaction in which hydroxymethyl group from 5,10-methylenetetrahydrofolate is transferred onto alpha-ketoisovalerate to form ketopantoate. This is 3-methyl-2-oxobutanoate hydroxymethyltransferase from Caldicellulosiruptor saccharolyticus (strain ATCC 43494 / DSM 8903 / Tp8T 6331).